The primary structure comprises 139 residues: Large ribosomal subunit protein uL16 (139 aa).

It belongs to the universal ribosomal protein uL16 family. In terms of assembly, part of the 50S ribosomal subunit.

In terms of biological role, binds 23S rRNA and is also seen to make contacts with the A and possibly P site tRNAs. The sequence is that of Large ribosomal subunit protein uL16 from Picosynechococcus sp. (strain ATCC 27264 / PCC 7002 / PR-6) (Agmenellum quadruplicatum).